Consider the following 194-residue polypeptide: Adenylate kinase (194 aa).

10–15 (GAGKGT) contacts ATP. Residues 30 to 59 (STGDMLRAAVKAETEIGKKAKAVMDAGELV) form an NMP region. AMP is bound by residues T31, R36, 57-59 (ELV), 85-88 (GYPR), and Q92. Residues 126-142 (KRAEDAQAAGQPVRRDD) form an LID region. R127 provides a ligand contact to ATP. AMP-binding residues include R139 and R150. Residue A178 coordinates ATP.

It belongs to the adenylate kinase family. Monomer.

The protein localises to the cytoplasm. The catalysed reaction is AMP + ATP = 2 ADP. It participates in purine metabolism; AMP biosynthesis via salvage pathway; AMP from ADP: step 1/1. Its function is as follows. Catalyzes the reversible transfer of the terminal phosphate group between ATP and AMP. Plays an important role in cellular energy homeostasis and in adenine nucleotide metabolism. This Chelativorans sp. (strain BNC1) protein is Adenylate kinase.